Consider the following 120-residue polypeptide: uncharacterized protein (120 aa).

This is an uncharacterized protein from Mycobacterium tuberculosis (strain CDC 1551 / Oshkosh).